Here is a 747-residue protein sequence, read N- to C-terminus: Homeobox-leucine zipper protein GLABRA 2 (747 aa).

Positions 31 to 112 (RNASSGSTNP…KKYHRHTTDQ (82 aa)) are disordered. Residues 58–68 (EMSSENSGPTR) are compositionally biased toward polar residues. A compositionally biased stretch (acidic residues) spans 73–90 (EDLEGEDHDDEEEEEEDG). The span at 97 to 107 (TNKRKRKKYHR) shows a compositional bias: basic residues. Residues 101–160 (KRKKYHRHTTDQIRHMEALFKETPHPDEKQRQQLSKQLGLAPRQVKFWFQNRRTQIKAIQ) constitute a DNA-binding region (homeobox). Residues 155–223 (QIKAIQERHE…LDKLRAALGR (69 aa)) adopt a coiled-coil conformation. The START domain maps to 250–489 (FALEKSRIAE…LQLHCERLVF (240 aa)).

The protein belongs to the HD-ZIP homeobox family. Class IV subfamily. Interacts with GIR1 and GIR2. As to expression, expressed in individual developing trichome cells of the emerging leaf primordia. Expressed in differentiating hairless cells of root epidermis.

It is found in the nucleus. Functionally, transcription factor involved in the determination of epidermal cell identity. Required for correct morphological development and maturation of trichomes. Regulates the frequency of trichome initiation and determines trichome spacing. Acts as a negative factor for root hair development. Required for ectopic repression of root hair development in a subset of epidermal cells. May suppress hair formation in root epidermis by promoting differentiation into hairless epidermal cells. Directly suppresses the bHLH transcription factor genes, RHD6, RSL1, RSL2, LRL1, and LRL2, which have diverse functions in root hair development. Required for normal development of seed coat mucilage. Involved in the control of seed oil accumulation. Acts as a negative regulator of anthocyanin biosynthesis. May directly repress the expression of some component genes from the MYB-bHLH-WD40 (MBW) transcriptional activator complex. The MBW complex activates the transcription of late biosynthesis genes in the flavonoid pathway, leading to the production of anthocyanins. This Arabidopsis thaliana (Mouse-ear cress) protein is Homeobox-leucine zipper protein GLABRA 2.